Consider the following 773-residue polypeptide: Disintegrin and metalloproteinase domain-containing protein 11 (773 aa).

The N-terminal stretch at 1 to 24 is a signal peptide; it reads MRRLRRWAIAALLLLPLLPPPGLG. The propeptide occupies 25–229; it reads ALGPRGALHW…PNWPKLRRKR (205 aa). Positions 36–82 are disordered; sequence SSAHVGSPESPEGSEVTEPSRLVRQSSGGEVRKPQLDTRVRQDPPRG. The span at 65–79 shows a compositional bias: basic and acidic residues; sequence EVRKPQLDTRVRQDP. N-linked (GlcNAc...) asparagine glycosylation is found at asparagine 100 and asparagine 167. Topologically, residues 230–738 are extracellular; the sequence is QVRRGHPTVH…ERYKGPSGTN (509 aa). The 200-residue stretch at 243 to 442 folds into the Peptidase M12B domain; that stretch reads KYVELIVIND…GGGSCLFNKP (200 aa). Residues 336–773 are required for localization to cerebellar cortex basket cell terminals. Also required for localization of KCNA1, KCNA2, DLG4 and ADAM22 to cerebellar cortex basket cell terminal perisomatic axons and pinceaux; it reads GRTFQSTSSG…NIRRGRSGGA (438 aa). Cystine bridges form between cysteine 353–cysteine 437, cysteine 396–cysteine 421, cysteine 398–cysteine 405, and cysteine 507–cysteine 527. The Disintegrin domain maps to 448–535; that stretch reads PPECGNGFVE…QCPPNLHKLD (88 aa). N-linked (GlcNAc...) asparagine glycosylation is found at asparagine 609 and asparagine 677. 3 disulfides stabilise this stretch: cysteine 681–cysteine 696, cysteine 690–cysteine 702, and cysteine 704–cysteine 713. The 33-residue stretch at 681–713 folds into the EGF-like domain; the sequence is CPGSGERRICSHHGVCSNEGKCICQPDWTGKDC. The chain crosses the membrane as a helical span at residues 739-759; the sequence is IIIGSIAGAVLVAAIVLGGTG. Topologically, residues 760 to 773 are cytoplasmic; it reads WGFKNIRRGRSGGA.

In terms of assembly, interacts with LGI1 and LGI4. Interacts with KCNA1/KV1.1, KCNA2/KV1.2, DLG4/PSD-95 and ADAM22. Post-translationally, the precursor is cleaved by a furin endopeptidase. In terms of tissue distribution, abundantly expressed in cerebellar cortex basket cell terminals and pinceaux, weakly expressed in Purkinje cells (at protein level). Weakly expressed in the heart. Abundantly in expressed in neurons throughout the central nervous system including the telencephalon, diencephalic and brainstem nuclei, cerebellum and spinal cord. Expressed in the peripheral nervous system trigeminal and dorsal root ganglia. Expressed in the ganglion and bipolar cells of the retinae and weakly in the cornea of the eyes. Expressed in the hepatocytes of the parenchyma and hepatic lobules of the liver. Expressed in distinct focal areas in the juxtamedullary cortex of the kidney. Expressed in spermatocytes in the seminiferous tubules of the testes. Expressed in the stratum spinosum of the stratified squamous epithelia of the tongue and esophagus.

The protein localises to the presynaptic cell membrane. It is found in the perikaryon. Its subcellular location is the cell projection. The protein resides in the axon. Functionally, probable ligand for integrin in the brain. This is a non catalytic metalloprotease-like protein. Required for localization of the potassium channel subunit proteins KCNA1/KV1.1 and KCNA2/KV1.2 at cerebellar cortex basket cell distal terminals, is thereby involved in ephaptic inhibitory synchronization of Purkinje cell firing and response to stress. Plays a role in spatial learning and motor coordination. Involved in the nociceptive pain response to chemical-derived stimulation. This is Disintegrin and metalloproteinase domain-containing protein 11 (Adam11) from Mus musculus (Mouse).